The following is a 49-amino-acid chain: Large ribosomal subunit protein bL32 (49 aa).

Belongs to the bacterial ribosomal protein bL32 family.

The polypeptide is Large ribosomal subunit protein bL32 (Helicobacter hepaticus (strain ATCC 51449 / 3B1)).